Consider the following 196-residue polypeptide: MAQGKESVSVVEMEGSGNGPAVEMRHFETLFRLLPVGLCISALVLMLKSEQSDQYMQLDYSNVDAFRCLAYANGICAGYSLISAFDSMVPVSHHISRSWILFLLDQGITYLMLAGGAVATQVLYVAYKGDEKATWEQICGSYGRFCNRAGASVIISFFALVCFLLLSLLSAYRLFSKYDPPIHGGAKLEDQTTAQI.

Residues 1–26 (MAQGKESVSVVEMEGSGNGPAVEMRH) are Cytoplasmic-facing. A helical membrane pass occupies residues 27–47 (FETLFRLLPVGLCISALVLML). Over 48 to 68 (KSEQSDQYMQLDYSNVDAFRC) the chain is Extracellular. The helical transmembrane segment at 69-89 (LAYANGICAGYSLISAFDSMV) threads the bilayer. At 90–98 (PVSHHISRS) the chain is on the cytoplasmic side. A helical transmembrane segment spans residues 99 to 119 (WILFLLDQGITYLMLAGGAVA). Residues 120–148 (TQVLYVAYKGDEKATWEQICGSYGRFCNR) lie on the Extracellular side of the membrane. A helical transmembrane segment spans residues 149–169 (AGASVIISFFALVCFLLLSLL). Residues 170-196 (SAYRLFSKYDPPIHGGAKLEDQTTAQI) lie on the Cytoplasmic side of the membrane.

The protein belongs to the Casparian strip membrane proteins (CASP) family. Homodimer and heterodimers.

It is found in the cell membrane. This is CASP-like protein 2A2 from Picea sitchensis (Sitka spruce).